A 418-amino-acid chain; its full sequence is Serine hydroxymethyltransferase (418 aa).

(6S)-5,6,7,8-tetrahydrofolate-binding positions include Leu-121 and 125-127 (GHL). Lys-230 is modified (N6-(pyridoxal phosphate)lysine). (6S)-5,6,7,8-tetrahydrofolate is bound at residue 356–358 (SPF).

The protein belongs to the SHMT family. In terms of assembly, homodimer. Pyridoxal 5'-phosphate serves as cofactor.

It is found in the cytoplasm. The enzyme catalyses (6R)-5,10-methylene-5,6,7,8-tetrahydrofolate + glycine + H2O = (6S)-5,6,7,8-tetrahydrofolate + L-serine. It participates in one-carbon metabolism; tetrahydrofolate interconversion. The protein operates within amino-acid biosynthesis; glycine biosynthesis; glycine from L-serine: step 1/1. In terms of biological role, catalyzes the reversible interconversion of serine and glycine with tetrahydrofolate (THF) serving as the one-carbon carrier. This reaction serves as the major source of one-carbon groups required for the biosynthesis of purines, thymidylate, methionine, and other important biomolecules. Also exhibits THF-independent aldolase activity toward beta-hydroxyamino acids, producing glycine and aldehydes, via a retro-aldol mechanism. This is Serine hydroxymethyltransferase from Pseudoalteromonas atlantica (strain T6c / ATCC BAA-1087).